The sequence spans 289 residues: Shikimate dehydrogenase (NADP(+)) (289 aa).

Residues 19–21 (SMS) and T66 contribute to the shikimate site. The active-site Proton acceptor is the K70. Shikimate is bound by residues N91 and D106. NADP(+)-binding positions include 131–135 (GAGGA), 155–160 (NRTLKK), and L229. Y231 contacts shikimate. Position 252 (G252) interacts with NADP(+).

It belongs to the shikimate dehydrogenase family. In terms of assembly, homodimer.

The enzyme catalyses shikimate + NADP(+) = 3-dehydroshikimate + NADPH + H(+). It functions in the pathway metabolic intermediate biosynthesis; chorismate biosynthesis; chorismate from D-erythrose 4-phosphate and phosphoenolpyruvate: step 4/7. Its function is as follows. Involved in the biosynthesis of the chorismate, which leads to the biosynthesis of aromatic amino acids. Catalyzes the reversible NADPH linked reduction of 3-dehydroshikimate (DHSA) to yield shikimate (SA). The sequence is that of Shikimate dehydrogenase (NADP(+)) from Halothermothrix orenii (strain H 168 / OCM 544 / DSM 9562).